A 61-amino-acid chain; its full sequence is Large ribosomal subunit protein bL32 (61 aa).

A compositionally biased stretch (basic residues) spans 1–10; that stretch reads MAQPKKKTSN. Residues 1–23 are disordered; that stretch reads MAQPKKKTSNAKRDQRRATWKRK.

This sequence belongs to the bacterial ribosomal protein bL32 family.

In Gloeobacter violaceus (strain ATCC 29082 / PCC 7421), this protein is Large ribosomal subunit protein bL32.